Here is an 879-residue protein sequence, read N- to C-terminus: Alanine--tRNA ligase (879 aa).

H566, H570, C668, and H672 together coordinate Zn(2+).

This sequence belongs to the class-II aminoacyl-tRNA synthetase family. The cofactor is Zn(2+).

The protein localises to the cytoplasm. The enzyme catalyses tRNA(Ala) + L-alanine + ATP = L-alanyl-tRNA(Ala) + AMP + diphosphate. Functionally, catalyzes the attachment of alanine to tRNA(Ala) in a two-step reaction: alanine is first activated by ATP to form Ala-AMP and then transferred to the acceptor end of tRNA(Ala). Also edits incorrectly charged Ser-tRNA(Ala) and Gly-tRNA(Ala) via its editing domain. This Listeria monocytogenes serovar 1/2a (strain ATCC BAA-679 / EGD-e) protein is Alanine--tRNA ligase.